The primary structure comprises 213 residues: Putative protein Brevis radix-like 3 (213 aa).

The tract at residues Cys7–Asp27 is disordered. The BRX domain maps to Arg158–Leu213.

This sequence belongs to the BRX family.

Its subcellular location is the nucleus. The chain is Putative protein Brevis radix-like 3 (BRXL3) from Oryza sativa subsp. japonica (Rice).